The primary structure comprises 154 residues: Small ribosomal subunit protein uS13m (154 aa).

Residues 1–30 constitute a mitochondrion transit peptide; that stretch reads MLGLRRSATTLFDISQSLLRNVTFHGLRVQ. Positions 121-154 are disordered; it reads RHGLPCRGQRTSTNARTKKGKAVAIAGKKKAPRK. The segment covering 136–154 has biased composition (basic residues); that stretch reads RTKKGKAVAIAGKKKAPRK.

This sequence belongs to the universal ribosomal protein uS13 family. As to quaternary structure, part of the small ribosomal subunit.

It is found in the mitochondrion. Located at the top of the head of the small subunit, it contacts several helices of the 18S rRNA. This chain is Small ribosomal subunit protein uS13m (RPS13), found in Arabidopsis thaliana (Mouse-ear cress).